A 749-amino-acid chain; its full sequence is Pectate disaccharide-lyase (749 aa).

Residues 1 to 26 (MKYAASGLLSVALNSLLLLGSNQRFA) form the signal peptide. 4 residues coordinate Ca(2+): D538, D562, D563, and D566. K595 serves as the catalytic Proton acceptor.

This sequence belongs to the polysaccharide lyase 9 family. The cofactor is Ca(2+).

The protein resides in the secreted. It carries out the reaction [(1-&gt;4)-alpha-D-galacturonosyl](n) = 4-(4-deoxy-alpha-D-galact-4-enuronosyl)-D-galacturonate + [(1-&gt;4)-alpha-D-galacturonosyl](n-2). Activity on pectate is nearly completely inhibited by ethyleneglycol-bis-(P-aminoethyl ether) N,N'-tetraacetic acid (EGTA), EDTA or nitrilotriacetic acid. Activity is specifically restored by the addition of Ca(2+). Functionally, exo-cleaving lyase that catalyzes the digestion of pectate. Contributes to pectate catabolism but not to bacterial virulence. In vitro can also use citrus pectin and highly methyl-esterified Link pectin as substrates. This chain is Pectate disaccharide-lyase, found in Dickeya chrysanthemi (Pectobacterium chrysanthemi).